Consider the following 334-residue polypeptide: MIRIALDLMGGDRAPEEIKAGALMYLQNVKKTGRKVQLVLVGLADTLKEFEHFKSEGLVELVEAQEALPMDVKPTDALRRKNSSMYIASQLVKEKKAEAIVSAGNTGALLSCATLVVGRLPGVDRPALAVPVPSLNDFTILIDAGANAEVKHEWLIQFAAMGIEYAKILGKRNPKVGLLNVGTEENKGTELEKQAYQLLKQAFNESFYGNVEGNDINIGTVDVVVTNGFSGNIAMKTMEGVAKLISHTIKQEAKKSLDGILGALLFSRTLKKLKKKLDPRTYGGSFFLGVDGIVVKAHGNSDRIAIYNAIDVAVRGVEGKLVEQLNERLKVYNK.

This sequence belongs to the PlsX family. As to quaternary structure, homodimer. Probably interacts with PlsY.

It localises to the cytoplasm. The catalysed reaction is a fatty acyl-[ACP] + phosphate = an acyl phosphate + holo-[ACP]. The protein operates within lipid metabolism; phospholipid metabolism. In terms of biological role, catalyzes the reversible formation of acyl-phosphate (acyl-PO(4)) from acyl-[acyl-carrier-protein] (acyl-ACP). This enzyme utilizes acyl-ACP as fatty acyl donor, but not acyl-CoA. The polypeptide is Phosphate acyltransferase (Fervidobacterium nodosum (strain ATCC 35602 / DSM 5306 / Rt17-B1)).